Consider the following 1034-residue polypeptide: Integrin alpha-V (1034 aa).

The first 19 residues, 1–19, serve as a signal peptide directing secretion; it reads MAALRASLLLSCALTAARA. Over 20–978 the chain is Extracellular; that stretch reads FNLDAERPAV…WGIQPQPMPV (959 aa). FG-GAP repeat units lie at residues 21 to 86, 97 to 158, 161 to 213, 225 to 279, 280 to 345, 346 to 403, and 407 to 470; these read NLDA…RNCQ, DFAP…VEYA, RSTT…LAKY, QLAT…GKNM, SSMY…GGFQ, IAKL…GLNA, and RILE…VNPT. A glycan (N-linked (GlcNAc...) asparagine) is linked at asparagine 62. 3 disulfides stabilise this stretch: cysteine 77-cysteine 85, cysteine 126-cysteine 146, and cysteine 160-cysteine 173. Aspartate 248, aspartate 252, isoleucine 254, and aspartate 256 together coordinate Ca(2+). N-linked (GlcNAc...) asparagine glycosylation is found at asparagine 278 and asparagine 284. Positions 302, 304, 306, 308, 310, 367, 369, 371, 373, 375, 431, 433, 435, 437, and 439 each coordinate Ca(2+). Intrachain disulfides connect cysteine 479-cysteine 488 and cysteine 494-cysteine 551. Residues asparagine 540 and asparagine 601 are each glycosylated (N-linked (GlcNAc...) asparagine). 2 disulfide bridges follow: cysteine 612–cysteine 618 and cysteine 684–cysteine 697. Residues asparagine 690, asparagine 821, asparagine 837, and asparagine 860 are each glycosylated (N-linked (GlcNAc...) asparagine). 2 disulfides stabilise this stretch: cysteine 838/cysteine 900 and cysteine 890/cysteine 895. N-linked (GlcNAc...) asparagine glycans are attached at residues asparagine 931, asparagine 951, asparagine 959, and asparagine 966. Residues 979-1002 traverse the membrane as a helical segment; it reads PVWVIILAVLAGLLLLAVLVLVMY. At 1003–1034 the chain is on the cytoplasmic side; sequence RMGFFKRVRPPQEEQEREQLQPHENGEGTSEA. The GFFKR motif motif lies at 1005-1009; sequence GFFKR. Over residues 1013–1028 the composition is skewed to basic and acidic residues; the sequence is PQEEQEREQLQPHENG. The interval 1013 to 1034 is disordered; the sequence is PQEEQEREQLQPHENGEGTSEA.

The protein belongs to the integrin alpha chain family. Heterodimer of an alpha and a beta subunit. The alpha subunit is composed of a heavy and a light chain linked by a disulfide bond. Alpha-V (ITGAV) associates with either beta-1 (ITGB1), beta-3 (ITGB3), beta-5 (ITGB5), beta-6 (ITGB6) or beta-8 (ITGB8). Interacts with RAB25. Interacts with CIB1. Integrins ITGAV:ITGB3 and ITGAV:ITGB5 interact with FBLN5 (via N-terminus). ITGAV:ITGB3 and ITGAV:ITGB5 interact with CCN3. ITGAV:ITGB3 interacts with ADGRA2. ITGAV:ITGB3 interacts with FGF2; it is likely that FGF2 can simultaneously bind ITGAV:ITGB3 and FGF receptors. ITGAV:ITGB3 is found in a ternary complex with CX3CR1 and CX3CL1. ITGAV:ITGB3 is found in a ternary complex with NRG1 and ERBB3. ITGAV:ITGB3 is found in a ternary complex with FGF1 and FGFR1. ITGAV:ITGB3 is found in a ternary complex with IGF1 and IGF1R. ITGAV:ITGB3 interacts with IGF2. ITGAV:ITGB3 and ITGAV:ITGB6 interact with FBN1. ITGAV:ITGB3 interacts with CD9, CD81 and CD151 (via second extracellular domain). ITGAV:ITGB6 interacts with TGFB1.

Its subcellular location is the membrane. It localises to the cell junction. The protein localises to the focal adhesion. In terms of biological role, the alpha-V (ITGAV) integrins are receptors for vitronectin, cytotactin, fibronectin, fibrinogen, laminin, matrix metalloproteinase-2, osteopontin, osteomodulin, prothrombin, thrombospondin, TGFB1 and vWF. They recognize the sequence R-G-D in a wide array of ligands. Alpha-V integrins may play a role in embryo implantation, angiogenesis and wound healing. ITGAV:ITGB3 binds to fractalkine (CX3CL1) and may act as its coreceptor in CX3CR1-dependent fractalkine signaling. ITGAV:ITGB3 binds to NRG1 (via EGF domain) and this binding is essential for NRG1-ERBB signaling. ITGAV:ITGB3 binds to FGF1 and this binding is essential for FGF1 signaling. ITGAV:ITGB3 binds to FGF2 and this binding is essential for FGF2 signaling. ITGAV:ITGB3 binds to IGF1 and this binding is essential for IGF1 signaling. ITGAV:ITGB3 binds to IGF2 and this binding is essential for IGF2 signaling. ITGAV:ITGB3 binds to IL1B and this binding is essential for IL1B signaling. ITGAV:ITGB3 binds to PLA2G2A via a site (site 2) which is distinct from the classical ligand-binding site (site 1) and this induces integrin conformational changes and enhanced ligand binding to site 1. ITGAV:ITGB3 and ITGAV:ITGB6 act as receptors for fibrillin-1 (FBN1) and mediate R-G-D-dependent cell adhesion to FBN1. Integrin alpha-V/beta-6 or alpha-V/beta-8 (ITGAV:ITGB6 or ITGAV:ITGB8) mediates R-G-D-dependent release of transforming growth factor beta-1 (TGF-beta-1) from regulatory Latency-associated peptide (LAP), thereby playing a key role in TGF-beta-1 activation. ITGAV:ITGB3 acts as a receptor for CD40LG. ITGAV:ITGB3 acts as a receptor for IBSP and promotes cell adhesion and migration to IBSP. This is Integrin alpha-V (ITGAV) from Gallus gallus (Chicken).